The chain runs to 513 residues: Zinc finger CCCH-type with G patch domain-containing protein (513 aa).

Met-1 is modified (N-acetylmethionine). The disordered stretch occupies residues 90–131; sequence EVPVAPGAELETVPSRETGPGPTERGQEEDDGEDEEGGAALS. The span at 116 to 126 shows a compositional bias: acidic residues; it reads QEEDDGEDEEG. A C3H1-type zinc finger spans residues 176 to 202; that stretch reads KSLKPCSFFLEGKCRFQENCRFSHGQV. The segment at 267–296 is disordered; the sequence is LPPLRTEPAGSSDSDGSDADDPSYARVVEP. Ser-278 and Ser-355 each carry phosphoserine. The 47-residue stretch at 315 to 361 folds into the G-patch domain; it reads TRGIGSRLLAKMGYEFGKGLGRHAEGRVEPVHAVVLPRGKSLDQCAE. 2 disordered regions span residues 367 to 394 and 492 to 513; these read TRAG…PPPR and AQEA…MTEF. A compositionally biased stretch (basic and acidic residues) spans 497–513; the sequence is LQREQRKADTHKKMTEF.

Interacts with CHD4/Mi-2; the interaction is direct.

The protein localises to the nucleus. Its function is as follows. Transcription repressor that specifically binds the 5'-GGAG[GA]A[GA]A-3' consensus sequence. Represses transcription by recruiting the chromatin multiprotein complex NuRD to target promoters. Negatively regulates expression of EGFR, a gene involved in cell proliferation, survival and migration. Its ability to repress genes of the EGFR pathway suggest it may act as a tumor suppressor. This Bos taurus (Bovine) protein is Zinc finger CCCH-type with G patch domain-containing protein (ZGPAT).